The chain runs to 442 residues: Tyrosine--tRNA ligase (442 aa).

L-tyrosine is bound at residue Tyr55. The 'HIGH' region motif lies at 60–69 (PTAPSLHLGN). Tyr190 and Gln194 together coordinate L-tyrosine. A 'KMSKS' region motif is present at residues 250–254 (KFGKS). Lys253 lines the ATP pocket. One can recognise an S4 RNA-binding domain in the interval 373–438 (VAIAQALVDT…GKKTLAGVFV (66 aa)).

The protein belongs to the class-I aminoacyl-tRNA synthetase family. TyrS type 1 subfamily. Homodimer.

The protein resides in the cytoplasm. The enzyme catalyses tRNA(Tyr) + L-tyrosine + ATP = L-tyrosyl-tRNA(Tyr) + AMP + diphosphate + H(+). In terms of biological role, catalyzes the attachment of tyrosine to tRNA(Tyr) in a two-step reaction: tyrosine is first activated by ATP to form Tyr-AMP and then transferred to the acceptor end of tRNA(Tyr). The sequence is that of Tyrosine--tRNA ligase from Leifsonia xyli subsp. xyli (strain CTCB07).